Consider the following 338-residue polypeptide: UPF0284 protein TV0153 (338 aa).

The protein belongs to the UPF0284 family.

This Thermoplasma volcanium (strain ATCC 51530 / DSM 4299 / JCM 9571 / NBRC 15438 / GSS1) protein is UPF0284 protein TV0153.